Here is a 386-residue protein sequence, read N- to C-terminus: Skeletal aspartic acid-rich protein 1 (386 aa).

Positions 1-24 (MAFVSCFHLRLLFLCLALFMAAEC) are cleaved as a signal peptide. Disordered stretches follow at residues 33 to 145 (VDSD…PFSL) and 244 to 291 (EVTD…DCPH). Residues 63-107 (YDASDDNDNDNDDDDNNDNDNDNDDDNDVDRDNDNDDDDFDDSND) show a composition bias toward acidic residues. Basic and acidic residues-rich tracts occupy residues 133–142 (HSVESFEDRP) and 244–265 (EVTD…KDTP). Acidic residues predominate over residues 266 to 288 (DTDSDPDDSSDNANDGDDDDDDD).

Component of the acid-insoluble and acid-soluble organic matrix of the aragonitic skeleton (at protein level).

Its subcellular location is the secreted. The sequence is that of Skeletal aspartic acid-rich protein 1 from Acropora millepora (Staghorn coral).